We begin with the raw amino-acid sequence, 233 residues long: MGRKPVEALAMDMLHFEKQAYRQGFQLVAGIDEVGRGPLAGPVVAAAVVVPAGVRLPGVADSKKLSAGQRESCCEDILSCGCDVGIGRVEPSEIDRVNILQATFQAMIAAVAGLKTPPHCLLIDGPYELPLFIAQKGIPQGDAKSLSIAAASIVAKVHRDRLMCEYHLKYPVYGFDRNKGYGTARHLDALRRYGPCPIHRLSFGGVRASEGEGLETAAGRQSSEGKKGRRPRG.

Residues 26–215 (QLVAGIDEVG…VRASEGEGLE (190 aa)) enclose the RNase H type-2 domain. A divalent metal cation-binding residues include Asp32, Glu33, and Asp124. The tract at residues 211–233 (GEGLETAAGRQSSEGKKGRRPRG) is disordered.

It belongs to the RNase HII family. It depends on Mn(2+) as a cofactor. Requires Mg(2+) as cofactor.

It is found in the cytoplasm. The enzyme catalyses Endonucleolytic cleavage to 5'-phosphomonoester.. In terms of biological role, endonuclease that specifically degrades the RNA of RNA-DNA hybrids. This is Ribonuclease HII from Syntrophobacter fumaroxidans (strain DSM 10017 / MPOB).